Here is a 183-residue protein sequence, read N- to C-terminus: Ras-like protein (183 aa).

Position 10–17 (Gly-10–Ser-17) interacts with GTP. The Effector region motif lies at Tyr-32–Tyr-40. GTP is bound by residues Asp-57 to Gln-61 and Asn-116 to Asp-119.

Belongs to the small GTPase superfamily. Ras family.

It localises to the cell membrane. The enzyme catalyses GTP + H2O = GDP + phosphate + H(+). Alternates between an inactive form bound to GDP and an active form bound to GTP. Activated by a guanine nucleotide-exchange factor (GEF) and inactivated by a GTPase-activating protein (GAP). Ras proteins bind GDP/GTP and possess intrinsic GTPase activity. The polypeptide is Ras-like protein (Carassius auratus (Goldfish)).